The following is a 141-amino-acid chain: Large ribosomal subunit protein uL13 (141 aa).

Belongs to the universal ribosomal protein uL13 family. As to quaternary structure, part of the 50S ribosomal subunit.

Its function is as follows. This protein is one of the early assembly proteins of the 50S ribosomal subunit, although it is not seen to bind rRNA by itself. It is important during the early stages of 50S assembly. The sequence is that of Large ribosomal subunit protein uL13 from Helicobacter pylori (strain P12).